Reading from the N-terminus, the 234-residue chain is Large ribosomal subunit protein uL1 (234 aa).

This sequence belongs to the universal ribosomal protein uL1 family. As to quaternary structure, part of the 50S ribosomal subunit.

In terms of biological role, binds directly to 23S rRNA. The L1 stalk is quite mobile in the ribosome, and is involved in E site tRNA release. Its function is as follows. Protein L1 is also a translational repressor protein, it controls the translation of the L11 operon by binding to its mRNA. The polypeptide is Large ribosomal subunit protein uL1 (Wolinella succinogenes (strain ATCC 29543 / DSM 1740 / CCUG 13145 / JCM 31913 / LMG 7466 / NCTC 11488 / FDC 602W) (Vibrio succinogenes)).